The chain runs to 122 residues: UPF0102 protein Krad_1407 (122 aa).

It belongs to the UPF0102 family.

In Kineococcus radiotolerans (strain ATCC BAA-149 / DSM 14245 / SRS30216), this protein is UPF0102 protein Krad_1407.